The primary structure comprises 483 residues: NAD-dependent protein deacetylase SRT1 (483 aa).

In terms of domain architecture, Deacetylase sirtuin-type spans 27 to 270; the sequence is PELLHKKIEE…MYMMNLRIPP (244 aa). Residues 53 to 57, 63 to 65, and 114 to 117 contribute to the NAD(+) site; these read AGIST, DFR, and QNVD. H134 functions as the Proton acceptor in the catalytic mechanism. Zn(2+)-binding residues include C142, C145, C167, and C172. NAD(+) contacts are provided by residues 209–211 and 235–237; these read GTS and NLQ.

This sequence belongs to the sirtuin family. Class IV subfamily. It depends on Zn(2+) as a cofactor.

It is found in the nucleus. It catalyses the reaction N(6)-acetyl-L-lysyl-[protein] + NAD(+) + H2O = 2''-O-acetyl-ADP-D-ribose + nicotinamide + L-lysyl-[protein]. Functionally, NAD-dependent protein deacetylase. Has deacetylase activity towards H3K9Ac. May have a function in the safeguard against genome instability and DNA damage to ensure plant cell growth. May negatively regulate metabolic signal transduction involving methanol and jasmonates during leaf senescence. Required for histone H3K9Ac deacetylation and repression of AP2-1/RSR1 and amylase genes during early seed development. Functions as an epigenetic regulator to repress the expression of glycolytic genes and glycolysis in seedlings. Reduces lysine acetylation of the glycolytic glyceraldehyde-3-phosphate dehydrogenase (GAPDH), which is found to also function as an activator of glycolytic gene expression. The polypeptide is NAD-dependent protein deacetylase SRT1 (Oryza sativa subsp. indica (Rice)).